A 96-amino-acid polypeptide reads, in one-letter code: Muconolactone Delta-isomerase 2 (96 aa).

The protein belongs to the muconolactone Delta-isomerase family. As to quaternary structure, homodecamer.

The enzyme catalyses (S)-muconolactone = (4,5-dihydro-5-oxofuran-2-yl)-acetate. It participates in aromatic compound metabolism; beta-ketoadipate pathway; 5-oxo-4,5-dihydro-2-furylacetate from catechol: step 3/3. The sequence is that of Muconolactone Delta-isomerase 2 (catC2) from Acinetobacter lwoffii.